We begin with the raw amino-acid sequence, 233 residues long: 2-C-methyl-D-erythritol 4-phosphate cytidylyltransferase (233 aa).

It belongs to the IspD/TarI cytidylyltransferase family. IspD subfamily.

It catalyses the reaction 2-C-methyl-D-erythritol 4-phosphate + CTP + H(+) = 4-CDP-2-C-methyl-D-erythritol + diphosphate. It participates in isoprenoid biosynthesis; isopentenyl diphosphate biosynthesis via DXP pathway; isopentenyl diphosphate from 1-deoxy-D-xylulose 5-phosphate: step 2/6. Catalyzes the formation of 4-diphosphocytidyl-2-C-methyl-D-erythritol from CTP and 2-C-methyl-D-erythritol 4-phosphate (MEP). This chain is 2-C-methyl-D-erythritol 4-phosphate cytidylyltransferase, found in Vibrio atlanticus (strain LGP32) (Vibrio splendidus (strain Mel32)).